Reading from the N-terminus, the 663-residue chain is MAHLRSPSGFGDPGKKDQKESEEELEEEEEEEEVEEEEEEVEEEEEEVEEEEEEVVEEELVGEEQELEAPETFSEEYLWKVTDIGDYDDDFPDVRPRLASIVSPSLTSTFVPSQSATSTETPSASPPSSTSSHKSFPKIFQTFRKDMSEMSIDRNIHRNLSPGIPVSVQTEESWLQDLSDKVQSRKKASKEKAEPECLASKLREKWVINPEESKLNILYELEFKEDFITLFEPSLRTLPSIGPPSILAYKEESSNLGINFKDEEEETSPKCEFCGSDLRAFFSNVDVSSEPKGHASCCIAFQNLIDYIYEEQIKTKPPKAELIAIDPHAAHGSEVDRLKAKEKALQRKQEQRMARHFAIISREQTHFSEDDSKRLKTISYQLSVDIPEKQIIDDIVFDFQLRNSNMSIICCDSRIACGKVVRNELLEKHYKHGSKFLTSFPDGTTQIFYPSGNLAIIRVPNKVNGFTCIVQEDMPTNPAILAVLDSSGRSSCYHPNGNVWVYINILGGQYSDQAGNRIRAWNWSNSITSSPFVSFKPVFLALNRYIGVRILEQDKISITFLAMGQQARISVGTKVKLPNPEEIPILRYVSGDDLLLLASLIKIRRLFHKLEGCVNFPSSQVWEKLKQPSYLSSLSLKLIALCHSSGIKQDIMKTIRNIINEEI.

Disordered stretches follow at residues 1–74 and 106–136; these read MAHL…ETFS and LTSTFVPSQSATSTETPSASPPSSTSSHKSF. Acidic residues predominate over residues 20–69; the sequence is ESEEELEEEEEEEEVEEEEEEVEEEEEEVEEEEEEVVEEELVGEEQELEA. Low complexity predominate over residues 112–132; the sequence is PSQSATSTETPSASPPSSTSS.

Belongs to the ERICH6 family.

It is found in the nucleus. This Homo sapiens (Human) protein is Glutamate-rich protein 6 (ERICH6).